A 129-amino-acid polypeptide reads, in one-letter code: Ribonuclease VapC12 (129 aa).

Residues Asp5 and Asp94 each contribute to the Mg(2+) site.

Belongs to the PINc/VapC protein family. It depends on Mg(2+) as a cofactor.

Toxic component of a type II toxin-antitoxin (TA) system. An RNase. The cognate antitoxin is VapB12. This is Ribonuclease VapC12 from Mycobacterium tuberculosis (strain CDC 1551 / Oshkosh).